The chain runs to 205 residues: Rho-related GTP-binding protein RhoQ (205 aa).

16–23 is a GTP binding site; it reads GDGAVGKT. An Effector region motif is present at residues 38-46; it reads YVPTVFDHY. GTP contacts are provided by residues 63-67 and 121-124; these read DTAGQ and TQID. A Cysteine methyl ester modification is found at C202. The S-farnesyl cysteine moiety is linked to residue C202. A propeptide spans 203–205 (removed in mature form); sequence LIT.

Belongs to the small GTPase superfamily. Rho family. In terms of assembly, interacts with EXO70, CDC42EP1, CDC42EP2 and CDC42EP3 in a GTP-dependent manner. Interacts with CDC42EP4, PARD6A, PARD6G (and probably PARD6B) in a GTP-dependent manner. Part of a quaternary complex containing PARD3, some PARD6 protein (PARD6A, PARD6B or PARD6G) and some atypical PKC protein (PRKCI or PRKCZ). Interacts with GOPC. Interacts with ARHGAP33/TCGAP. In terms of processing, may be post-translationally modified by both palmitoylation and polyisoprenylation.

It is found in the cytoplasm. Its subcellular location is the cell membrane. Its activity is regulated as follows. Regulated by guanine nucleotide exchange factors (GEFs) which promote the exchange of bound GDP for free GTP, GTPase activating proteins (GAPs) which increase the GTP hydrolysis activity, and GDP dissociation inhibitors which inhibit the dissociation of the nucleotide from the GTPase. Its function is as follows. Plasma membrane-associated small GTPase which cycles between an active GTP-bound and an inactive GDP-bound state. In active state binds to a variety of effector proteins to regulate cellular responses. Involved in epithelial cell polarization processes. May play a role in CFTR trafficking to the plasma membrane. Causes the formation of thin, actin-rich surface projections called filopodia. This Mus musculus (Mouse) protein is Rho-related GTP-binding protein RhoQ (Rhoq).